A 78-amino-acid chain; its full sequence is MKTLLLTFLVVTIVCLDLGYTLICHQLHGLQTCEPAQKFCQKRTTMFFPNHPVLLMGCTYNCPTERYSVCCSTDKCNK.

A signal peptide spans 1–21 (MKTLLLTFLVVTIVCLDLGYT). 4 disulfides stabilise this stretch: cysteine 24–cysteine 40, cysteine 33–cysteine 58, cysteine 62–cysteine 70, and cysteine 71–cysteine 76.

The protein belongs to the three-finger toxin family. Short-chain subfamily. As to expression, expressed by the venom gland.

It is found in the secreted. Functionally, this three-finger toxin binds and inhibits the nicotinic acetylcholine receptor (nAChR). The polypeptide is Short neurotoxin SNTX14 (Ophiophagus hannah (King cobra)).